The sequence spans 255 residues: MRILCTNDDGIHAPGLKIVEQIARQLSDDVWVVAPELDQSGVSHSLSLNDPLRLREIGPRHFAVRGTPTDCVIMGARHILGDKGPDLVLSGVNKGRNVAEDVVYSGTIAGALEGSILGFPSFALSQEFSMDNKGTPLWETALAHGPAILRKIIDQGVPKNTVININFPACAPGDVVGVRVTRQGKRNQGFLRVDERRDGRGNPYFWIGFERIAVVDTPAEGTDLAALAAGYVSVTPLRLDRTDDVFSQVLNTTLG.

Residues Asp8, Asp9, Ser40, and Asn93 each contribute to the a divalent metal cation site.

The protein belongs to the SurE nucleotidase family. Requires a divalent metal cation as cofactor.

The protein localises to the cytoplasm. It catalyses the reaction a ribonucleoside 5'-phosphate + H2O = a ribonucleoside + phosphate. Functionally, nucleotidase that shows phosphatase activity on nucleoside 5'-monophosphates. The polypeptide is 5'-nucleotidase SurE (Rhodopseudomonas palustris (strain BisB18)).